Reading from the N-terminus, the 617-residue chain is Guanylate cyclase soluble subunit beta-2 (617 aa).

H26 lines the heme pocket. A Guanylate cyclase domain is found at 391-519; the sequence is TILFSDVVTF…DTVNTASRME (129 aa). Positions 577–586 are enriched in basic and acidic residues; sequence RSKTPVDHKG. A disordered region spans residues 577-605; that stretch reads RSKTPVDHKGSTQKASLPTTKLQGSVQPS. Residues 588-604 are compositionally biased toward polar residues; sequence TQKASLPTTKLQGSVQP.

Belongs to the adenylyl cyclase class-4/guanylyl cyclase family. Heterodimer of an alpha and a beta chain. The cofactor is heme. Expressed in gastric signet ring cell carcinoma, but not in the normal stomach.

The protein localises to the cytoplasm. The catalysed reaction is GTP = 3',5'-cyclic GMP + diphosphate. Activated by nitric oxide in the presence of magnesium or manganese ions. The protein is Guanylate cyclase soluble subunit beta-2 (GUCY1B2) of Homo sapiens (Human).